The primary structure comprises 354 residues: 3-dehydroquinate synthase (354 aa).

NAD(+) is bound by residues 106–110 (GVIGD), 130–131 (TS), lysine 143, and lysine 152. Residues glutamate 185, histidine 246, and histidine 262 each contribute to the Zn(2+) site.

The protein belongs to the sugar phosphate cyclases superfamily. Dehydroquinate synthase family. Co(2+) is required as a cofactor. The cofactor is Zn(2+). NAD(+) serves as cofactor.

It localises to the cytoplasm. It catalyses the reaction 7-phospho-2-dehydro-3-deoxy-D-arabino-heptonate = 3-dehydroquinate + phosphate. It functions in the pathway metabolic intermediate biosynthesis; chorismate biosynthesis; chorismate from D-erythrose 4-phosphate and phosphoenolpyruvate: step 2/7. Its function is as follows. Catalyzes the conversion of 3-deoxy-D-arabino-heptulosonate 7-phosphate (DAHP) to dehydroquinate (DHQ). The polypeptide is 3-dehydroquinate synthase (Leuconostoc mesenteroides subsp. mesenteroides (strain ATCC 8293 / DSM 20343 / BCRC 11652 / CCM 1803 / JCM 6124 / NCDO 523 / NBRC 100496 / NCIMB 8023 / NCTC 12954 / NRRL B-1118 / 37Y)).